The following is a 475-amino-acid chain: 23S rRNA (uracil(1939)-C(5))-methyltransferase RlmD (475 aa).

A compositionally biased stretch (basic residues) spans Met1 to Pro10. Positions Met1–Asp33 are disordered. Residues Ala13–Ala30 show a composition bias toward basic and acidic residues. Residues Arg26–Glu85 form the TRAM domain. Cys98, Cys104, Cys107, and Cys183 together coordinate [4Fe-4S] cluster. Residues Gln294, Phe323, Asn328, Glu344, Asp371, and Asp388 each contribute to the S-adenosyl-L-methionine site. Cys414 (nucleophile) is an active-site residue. Residues Thr455 to Pro475 are disordered. The span at Asp457–Pro475 shows a compositional bias: basic and acidic residues.

Belongs to the class I-like SAM-binding methyltransferase superfamily. RNA M5U methyltransferase family. RlmD subfamily.

It carries out the reaction uridine(1939) in 23S rRNA + S-adenosyl-L-methionine = 5-methyluridine(1939) in 23S rRNA + S-adenosyl-L-homocysteine + H(+). Functionally, catalyzes the formation of 5-methyl-uridine at position 1939 (m5U1939) in 23S rRNA. The protein is 23S rRNA (uracil(1939)-C(5))-methyltransferase RlmD of Chromohalobacter salexigens (strain ATCC BAA-138 / DSM 3043 / CIP 106854 / NCIMB 13768 / 1H11).